The primary structure comprises 191 residues: Xanthine phosphoribosyltransferase (191 aa).

Residues Leu-20 and Asn-27 each coordinate xanthine. 128 to 132 (ANGQA) is a 5-phospho-alpha-D-ribose 1-diphosphate binding site. Xanthine is bound at residue Lys-156.

It belongs to the purine/pyrimidine phosphoribosyltransferase family. Xpt subfamily. Homodimer.

It localises to the cytoplasm. It catalyses the reaction XMP + diphosphate = xanthine + 5-phospho-alpha-D-ribose 1-diphosphate. Its pathway is purine metabolism; XMP biosynthesis via salvage pathway; XMP from xanthine: step 1/1. In terms of biological role, converts the preformed base xanthine, a product of nucleic acid breakdown, to xanthosine 5'-monophosphate (XMP), so it can be reused for RNA or DNA synthesis. In Acinetobacter baylyi (strain ATCC 33305 / BD413 / ADP1), this protein is Xanthine phosphoribosyltransferase.